The chain runs to 89 residues: Small ribosomal subunit protein uS14 (89 aa).

It belongs to the universal ribosomal protein uS14 family. In terms of assembly, part of the 30S ribosomal subunit. Contacts proteins S3 and S10.

Its function is as follows. Binds 16S rRNA, required for the assembly of 30S particles and may also be responsible for determining the conformation of the 16S rRNA at the A site. This is Small ribosomal subunit protein uS14 from Lacticaseibacillus casei (strain BL23) (Lactobacillus casei).